Consider the following 457-residue polypeptide: Cysteine--tRNA ligase (457 aa).

Zn(2+) is bound at residue Cys-30. The 'HIGH' region motif lies at 32 to 42 (PTVYAPAHIGN). Positions 221, 246, and 250 each coordinate Zn(2+). The short motif at 278 to 282 (KMSKS) is the 'KMSKS' region element. ATP is bound at residue Lys-281.

This sequence belongs to the class-I aminoacyl-tRNA synthetase family. Monomer. Requires Zn(2+) as cofactor.

It localises to the cytoplasm. The catalysed reaction is tRNA(Cys) + L-cysteine + ATP = L-cysteinyl-tRNA(Cys) + AMP + diphosphate. The protein is Cysteine--tRNA ligase of Opitutus terrae (strain DSM 11246 / JCM 15787 / PB90-1).